Here is a 221-residue protein sequence, read N- to C-terminus: Glutathione S-transferase class-mu 26 kDa isozyme 1 (221 aa).

The GST N-terminal domain maps to 2 to 82; that stretch reads PAKLGYWKIR…YIADKHGMIG (81 aa). Residues 7-8, 40-44, 53-54, and 66-67 contribute to the glutathione site; these read YW, WFSKK, NL, and QS. The GST C-terminal domain occupies 84–202; that stretch reads TPEERARVSM…ESNRFIKWPL (119 aa). Y110 lines the substrate pocket.

Belongs to the GST superfamily. Mu family. Homodimer.

The catalysed reaction is RX + glutathione = an S-substituted glutathione + a halide anion + H(+). In terms of biological role, conjugation of reduced glutathione to a wide number of exogenous and endogenous hydrophobic electrophiles. GST isoenzymes appear to play a central role in the parasite detoxification system. Other functions are also suspected including a role in increasing the solubility of haematin in the parasite gut. The sequence is that of Glutathione S-transferase class-mu 26 kDa isozyme 1 from Fasciola hepatica (Liver fluke).